The following is an 828-amino-acid chain: Chitin synthase 7 (828 aa).

Helical transmembrane passes span 17–37 (VIVG…VAAF), 57–77 (AVVV…IMVV), 95–115 (VGLQ…PWLF), 444–464 (FMQN…LAIL), 473–493 (LPVG…IYFG), and 501–521 (IWLY…YMVY). A glycan (N-linked (GlcNAc...) asparagine) is linked at Asn-615. 2 stretches are compositionally biased toward low complexity: residues 740 to 752 (SLVS…SNSN) and 813 to 822 (SNNDPNNSNS). Disordered regions lie at residues 740-780 (SLVS…LGRA) and 793-828 (LEIG…HQQR). A glycan (N-linked (GlcNAc...) asparagine) is linked at Asn-818.

The protein belongs to the chitin synthase family. Class VII subfamily.

It localises to the membrane. The catalysed reaction is [(1-&gt;4)-N-acetyl-beta-D-glucosaminyl](n) + UDP-N-acetyl-alpha-D-glucosamine = [(1-&gt;4)-N-acetyl-beta-D-glucosaminyl](n+1) + UDP + H(+). Its function is as follows. Polymerizes chitin, a structural polymer of the cell wall and septum, by transferring the sugar moiety of UDP-GlcNAc to the non-reducing end of the growing chitin polymer. Required for normal appressorial chitin content and for the normal formation and function of these infection structures. In Pyricularia oryzae (strain 70-15 / ATCC MYA-4617 / FGSC 8958) (Rice blast fungus), this protein is Chitin synthase 7.